Here is a 288-residue protein sequence, read N- to C-terminus: DegV domain-containing protein DR_1903 (288 aa).

The 279-residue stretch at 2 to 280 (IAVTTESTAD…PGVVAVLAFP (279 aa)) folds into the DegV domain. Hexadecanoate contacts are provided by Thr-59 and Thr-93.

May bind long-chain fatty acids, such as palmitate, and may play a role in lipid transport or fatty acid metabolism. In Deinococcus radiodurans (strain ATCC 13939 / DSM 20539 / JCM 16871 / CCUG 27074 / LMG 4051 / NBRC 15346 / NCIMB 9279 / VKM B-1422 / R1), this protein is DegV domain-containing protein DR_1903.